A 154-amino-acid polypeptide reads, in one-letter code: Large ribosomal subunit protein uL30 (154 aa).

Positions 114-139 (PVLRLHPPRGGHRGQKHPTAEGGQIG) are disordered. Over residues 119–129 (HPPRGGHRGQK) the composition is skewed to basic residues.

Belongs to the universal ribosomal protein uL30 family. Part of the 50S ribosomal subunit.

This Haloquadratum walsbyi (strain DSM 16790 / HBSQ001) protein is Large ribosomal subunit protein uL30.